A 269-amino-acid chain; its full sequence is MNNRYYQLNKNLIPYKLGCYIPFVVLGDPSIEISLEIIYSLIKNGADGLELGIPFSDPLADGPIIQQANLRAFSANITLTKCFEMLFKIRTHNPKIPIGILIYANLIFKLGIQKFYSICSKIDIDSVLIADVPIEESFEFEQHSIKNNIDSIFVCPPDASKNFLKKLSKHSTGYIYLLSRSGVTGIDMKITPPLKNFVKELKKLTSIPIIQGFGISNENQIKNIILSGVSGVICGSVIIQIIANNLNNKKIMLKKIKKLSNRFKKATII.

Active-site proton acceptor residues include Glu-50 and Asp-61.

The protein belongs to the TrpA family. As to quaternary structure, tetramer of two alpha and two beta chains.

The catalysed reaction is (1S,2R)-1-C-(indol-3-yl)glycerol 3-phosphate + L-serine = D-glyceraldehyde 3-phosphate + L-tryptophan + H2O. The protein operates within amino-acid biosynthesis; L-tryptophan biosynthesis; L-tryptophan from chorismate: step 5/5. Its function is as follows. The alpha subunit is responsible for the aldol cleavage of indoleglycerol phosphate to indole and glyceraldehyde 3-phosphate. This Buchnera aphidicola subsp. Baizongia pistaciae (strain Bp) protein is Tryptophan synthase alpha chain.